Reading from the N-terminus, the 130-residue chain is Iron-sulfur cluster assembly 1 homolog, mitochondrial (130 aa).

The N-terminal 24 residues, 1–24, are a transit peptide targeting the mitochondrion; it reads MATRVVATATVRAVKGRKLIPTRA. Fe cation contacts are provided by cysteine 58, cysteine 122, and cysteine 124.

It belongs to the HesB/IscA family. Interacts with cry. Detected in head.

It localises to the mitochondrion. Involved in the assembly of mitochondrial iron-sulfur proteins. Probably involved in the binding of an intermediate of Fe/S cluster assembly. Required for maintenance of circadian rhythms under constant darkness. This Drosophila melanogaster (Fruit fly) protein is Iron-sulfur cluster assembly 1 homolog, mitochondrial.